Consider the following 341-residue polypeptide: Anthranilate phosphoribosyltransferase (341 aa).

5-phospho-alpha-D-ribose 1-diphosphate-binding positions include G79, 82 to 83 (GD), T87, 89 to 92 (NIST), 107 to 115 (KHGNRAVSS), and S119. G79 lines the anthranilate pocket. Residue S91 participates in Mg(2+) binding. N110 contributes to the anthranilate binding site. Residue R165 participates in anthranilate binding. Residues D224 and E225 each contribute to the Mg(2+) site.

Belongs to the anthranilate phosphoribosyltransferase family. As to quaternary structure, homodimer. Mg(2+) serves as cofactor.

The catalysed reaction is N-(5-phospho-beta-D-ribosyl)anthranilate + diphosphate = 5-phospho-alpha-D-ribose 1-diphosphate + anthranilate. The protein operates within amino-acid biosynthesis; L-tryptophan biosynthesis; L-tryptophan from chorismate: step 2/5. Functionally, catalyzes the transfer of the phosphoribosyl group of 5-phosphorylribose-1-pyrophosphate (PRPP) to anthranilate to yield N-(5'-phosphoribosyl)-anthranilate (PRA). The protein is Anthranilate phosphoribosyltransferase of Bacillus mycoides (strain KBAB4) (Bacillus weihenstephanensis).